Here is a 562-residue protein sequence, read N- to C-terminus: Formate--tetrahydrofolate ligase (562 aa).

71–78 (TPAGEGKS) contributes to the ATP binding site.

Belongs to the formate--tetrahydrofolate ligase family.

The enzyme catalyses (6S)-5,6,7,8-tetrahydrofolate + formate + ATP = (6R)-10-formyltetrahydrofolate + ADP + phosphate. The protein operates within one-carbon metabolism; tetrahydrofolate interconversion. The sequence is that of Formate--tetrahydrofolate ligase from Bacillus thuringiensis (strain Al Hakam).